The chain runs to 732 residues: Elongation factor 2 (732 aa).

Residues 19 to 260 (ERIRNIDIAA…MVIKNLPNPR (242 aa)) enclose the tr-type G domain. GTP is bound by residues 28–35 (AHIDHGKT), 94–98 (DTPGH), and 148–151 (NKVD). At His598 the chain carries Diphthamide.

This sequence belongs to the TRAFAC class translation factor GTPase superfamily. Classic translation factor GTPase family. EF-G/EF-2 subfamily.

It is found in the cytoplasm. Its function is as follows. Catalyzes the GTP-dependent ribosomal translocation step during translation elongation. During this step, the ribosome changes from the pre-translocational (PRE) to the post-translocational (POST) state as the newly formed A-site-bound peptidyl-tRNA and P-site-bound deacylated tRNA move to the P and E sites, respectively. Catalyzes the coordinated movement of the two tRNA molecules, the mRNA and conformational changes in the ribosome. This chain is Elongation factor 2, found in Picrophilus torridus (strain ATCC 700027 / DSM 9790 / JCM 10055 / NBRC 100828 / KAW 2/3).